The chain runs to 1613 residues: Vitellogenin-2 (1613 aa).

The signal sequence occupies residues 1–15 (MRSIIIASLVALALA). In terms of domain architecture, Vitellogenin spans 24-687 (FEPKTDYHYK…EKNSFLPKDL (664 aa)). Asparagine 1268 carries an N-linked (GlcNAc...) asparagine glycan. The VWFD domain occupies 1308–1477 (SVCKVQKNQI…SYLLKNEECE (170 aa)). Intrachain disulfides connect cysteine 1310/cysteine 1440 and cysteine 1332/cysteine 1476. Residues 1491–1531 (KYERDEEQSDEYSSEETYDYEQENTKKSQKNQRSQKKSDLV) are disordered. Positions 1495 to 1512 (DEEQSDEYSSEETYDYEQ) are enriched in acidic residues.

In terms of tissue distribution, expressed in the intestine of adult hermaphrodites.

It localises to the secreted. Functionally, precursor of the egg-yolk proteins that are sources of nutrients during embryonic development. Together with other vitellogenins, may play a role in modulating life-span, acting via induction of autophagy and lysosomal lipolysis. The polypeptide is Vitellogenin-2 (vit-2) (Caenorhabditis elegans).